The chain runs to 384 residues: V-type proton ATPase subunit C (384 aa).

Belongs to the V-ATPase C subunit family. As to quaternary structure, V-ATPase is a heteromultimeric enzyme made up of two complexes: the ATP-hydrolytic V1 complex and the proton translocation V0 complex. The V1 complex consists of three catalytic AB heterodimers that form a heterohexamer, three peripheral stalks each consisting of EG heterodimers, one central rotor including subunits D and F, and the regulatory subunits C and H. The proton translocation complex V0 consists of the proton transport subunit a, a ring of proteolipid subunits c9c'', rotary subunit d, subunits e and f, and the accessory subunits vah-19/Ac45 and vah-20/PRR. Interacts with V-type proton ATPase subunits a1 unc-32, a2 vha-5 and a3 vha-6. As to expression, expressed ubiquitously; higher levels are found in gastrointestinal and hypodermal cells, as well as H-shaped excretory cell.

Its subcellular location is the cytoplasm. It is found in the membrane. Subunit of the V1 complex of vacuolar(H+)-ATPase (V-ATPase), a multisubunit enzyme composed of a peripheral complex (V1) that hydrolyzes ATP and a membrane integral complex (V0) that translocates protons. V-ATPase is responsible for acidifying and maintaining the pH of intracellular compartments and in some cell types, is targeted to the plasma membrane, where it is responsible for acidifying the extracellular environment. Subunit C is necessary for the assembly of the catalytic sector of the enzyme and is likely to have a specific function in its catalytic activity. Has roles in embryogenesis and ovulation. This chain is V-type proton ATPase subunit C, found in Caenorhabditis elegans.